We begin with the raw amino-acid sequence, 185 residues long: Ribosome-recycling factor (185 aa).

The protein belongs to the RRF family.

It localises to the cytoplasm. In terms of biological role, responsible for the release of ribosomes from messenger RNA at the termination of protein biosynthesis. May increase the efficiency of translation by recycling ribosomes from one round of translation to another. The chain is Ribosome-recycling factor from Campylobacter hominis (strain ATCC BAA-381 / DSM 21671 / CCUG 45161 / LMG 19568 / NCTC 13146 / CH001A).